Reading from the N-terminus, the 380-residue chain is Histidinol-phosphate aminotransferase (380 aa).

N6-(pyridoxal phosphate)lysine is present on Lys-232.

Belongs to the class-II pyridoxal-phosphate-dependent aminotransferase family. Histidinol-phosphate aminotransferase subfamily. As to quaternary structure, homodimer. The cofactor is pyridoxal 5'-phosphate.

The catalysed reaction is L-histidinol phosphate + 2-oxoglutarate = 3-(imidazol-4-yl)-2-oxopropyl phosphate + L-glutamate. The protein operates within amino-acid biosynthesis; L-histidine biosynthesis; L-histidine from 5-phospho-alpha-D-ribose 1-diphosphate: step 7/9. The sequence is that of Histidinol-phosphate aminotransferase from Mycobacterium bovis (strain BCG / Pasteur 1173P2).